The primary structure comprises 1133 residues: Myb-binding protein 1A (1133 aa).

Disordered stretches follow at residues 1 to 62 (MKSK…ENTA), 718 to 764 (PLSK…DAES), 924 to 943 (GEEHSEEDQENGKQPASRQA), and 1111 to 1133 (KKVAKQKKQAAAKPMVVEDEEST). 2 stretches are compositionally biased toward basic and acidic residues: residues 20 to 35 (KAKEDRKRAKTQKSEA) and 50 to 60 (EKPAETEEKEN). Acidic residues-rich tracts occupy residues 725–735 (GEEESDDELDK) and 744–762 (DDSEDEDEDEEEDEGEDDA).

This sequence belongs to the MYBBP1A family. In terms of assembly, interacts with nclb.

Its subcellular location is the cytoplasm. The protein resides in the nucleus. It is found in the nucleolus. Its function is as follows. Has a role in rRNA biogenesis, cell proliferation and tissue growth by contributing to the localization of nclb to the nucleolus. The chain is Myb-binding protein 1A from Drosophila melanogaster (Fruit fly).